We begin with the raw amino-acid sequence, 86 residues long: uncharacterized protein (86 aa).

Positions 1 to 31 are cleaved as a signal peptide; the sequence is MKQKLLLSGLAVSTVGITSYLLKDPSNRQKA. Residues 46-69 are disordered; sequence PDMETFPVDKAGHPDPQDIEDNKM. Residues 55–69 show a composition bias toward basic and acidic residues; it reads KAGHPDPQDIEDNKM.

This is an uncharacterized protein from Bacillus subtilis (strain 168).